The following is a 5005-amino-acid chain: Bridge-like lipid transfer protein family member 1 (5005 aa).

Residues 26-46 traverse the membrane as a helical segment; that stretch reads NVVWLLVATILSCGWIIYLTY. Disordered regions lie at residues 691-721, 1218-1257, and 1269-1310; these read LRPS…LPPD, LSLQ…SSVA, and GTKR…LKRQ. Low complexity-rich tracts occupy residues 700-711 and 1226-1240; these read RVVSSPSTSSRP and SHSS…SSSS. A compositionally biased stretch (basic and acidic residues) spans 1248–1257; that stretch reads GEKESPSSVA. Residues 1278–1303 are compositionally biased toward polar residues; sequence SIPTEISGNSPVSPNTQDKSVGQSPL. A phosphoserine mark is found at Ser1301, Ser1305, and Ser1323. Thr1325 bears the Phosphothreonine mark. Disordered stretches follow at residues 1343–1376, 1400–1427, 1521–1548, and 1676–1704; these read SDVS…SNSF, EFEP…QQID, TNKR…SSSF, and FSEN…QGQA. Residues Ser1355 and Ser1406 each carry the phosphoserine modification. Over residues 1521 to 1530 the composition is skewed to basic residues; it reads TNKRTSKSSL. A compositionally biased stretch (polar residues) spans 1691 to 1704; the sequence is TEQSTIGTTNQGQA. A phosphoserine mark is found at Ser1805 and Ser1808. Disordered stretches follow at residues 1924–1991, 2401–2420, and 2598–2677; these read DTER…PLMP, SDQN…QDDV, and TAGS…KDVV. Polar residues-rich tracts occupy residues 1931–1948, 1959–1971, 2401–2418, and 2598–2608; these read LTSN…YNTD, TSPS…NSVS, SDQN…TSQD, and TAGSASPTPTF. Ser2601 and Ser2603 each carry phosphoserine. Residues 2619–2638 are compositionally biased toward low complexity; the sequence is SDFSRSSRGSLNGGNRVNNA. Over residues 2643 to 2665 the composition is skewed to basic and acidic residues; sequence TNNENNKKESRNKNSLGRSERRT. Ser2755 carries the post-translational modification Phosphoserine. The interval 2928–2967 is disordered; it reads RQPSTAPQPVKEDIATPLPSEKTPTSVNQTPVETNEFPQL. A compositionally biased stretch (polar residues) spans 2949 to 2964; sequence KTPTSVNQTPVETNEF. Ser3562 carries the post-translational modification Phosphoserine. A compositionally biased stretch (polar residues) spans 3612 to 3622; that stretch reads PSYSRSKSISA. 6 disordered regions span residues 3612–3661, 3686–3744, 3821–3843, 3914–3954, 4088–4146, and 4325–4394; these read PSYS…VTFN, SSNS…ERFY, RRSY…KKFQ, YGMK…KGKG, GTTY…SSSS, and QSAS…KAAS. Ser3653 bears the Phosphoserine mark. Positions 3686–3700 are enriched in polar residues; the sequence is SSNSEGSCSVFSSPK. Positions 3727–3736 are enriched in acidic residues; that stretch reads EDSEKDEKDE. A compositionally biased stretch (basic and acidic residues) spans 3821 to 3837; the sequence is RRSYDRSSRSLDQDSPS. Composition is skewed to polar residues over residues 3931–3940 and 4098–4113; these read TVQSKTNTLL and PGGN…SASK. Over residues 4122–4146 the composition is skewed to low complexity; the sequence is LGSPLGRSRHSSSQSDLTSSSSSSS. A Phosphoserine modification is found at Ser4124. The span at 4325 to 4358 shows a compositional bias: polar residues; the sequence is QSASFTHMPQSPNVFNEHMTNSTMSPGTVGQSLK. Residues 4359 to 4372 are compositionally biased toward low complexity; sequence SPASIRSRSVSDSS. Positions 4381 to 4394 are enriched in polar residues; it reads KTSTPFNKSNKAAS.

In terms of tissue distribution, highly expressed in testis and ovary. Weakly or not expressed in other tissues.

Its subcellular location is the cell membrane. It localises to the endoplasmic reticulum membrane. It is found in the mitochondrion membrane. Its function is as follows. Tube-forming lipid transport protein which provides phosphatidylethanolamine for glycosylphosphatidylinositol (GPI) anchor synthesis in the endoplasmic reticulum. Plays a role in endosomal trafficking and endosome recycling. Also involved in the actin cytoskeleton and cilia structural dynamics. Acts as a regulator of phagocytosis. This chain is Bridge-like lipid transfer protein family member 1, found in Homo sapiens (Human).